Here is a 534-residue protein sequence, read N- to C-terminus: Probable alpha-galactosidase A (534 aa).

The N-terminal stretch at 1-25 (MRLITRWIPLANALASTMPVQVVAS) is a signal peptide. The cysteines at positions 47 and 79 are disulfide-linked. 4 N-linked (GlcNAc...) asparagine glycosylation sites follow: Asn-50, Asn-88, Asn-94, and Asn-124. Cys-127 and Cys-157 form a disulfide bridge. Asp-155 (nucleophile) is an active-site residue. Asn-204 carries N-linked (GlcNAc...) asparagine glycosylation. The active-site Proton donor is the Asp-213. Residues 413-534 (CSQVIPTGLI…GLPAGVHVAL (122 aa)) form the Ricin B-type lectin domain. Residues Cys-430 and Cys-443 are joined by a disulfide bond. The N-linked (GlcNAc...) asparagine glycan is linked to Asn-444. Cys-468 and Cys-481 are disulfide-bonded.

The protein belongs to the glycosyl hydrolase 27 family.

The protein localises to the secreted. The catalysed reaction is Hydrolysis of terminal, non-reducing alpha-D-galactose residues in alpha-D-galactosides, including galactose oligosaccharides, galactomannans and galactolipids.. Hydrolyzes a variety of simple alpha-D-galactoside as well as more complex molecules such as oligosaccharides and polysaccharides. The chain is Probable alpha-galactosidase A (aglA) from Aspergillus oryzae (strain ATCC 42149 / RIB 40) (Yellow koji mold).